The primary structure comprises 261 residues: uncharacterized protein (261 aa).

A divalent metal cation contacts are provided by His7, His9, Glu96, His132, His156, and Asp211.

The protein belongs to the metallo-dependent hydrolases superfamily. TatD-type hydrolase family. It depends on a divalent metal cation as a cofactor.

This is an uncharacterized protein from Mycoplasma pneumoniae (strain ATCC 29342 / M129 / Subtype 1) (Mycoplasmoides pneumoniae).